Reading from the N-terminus, the 187-residue chain is Threonylcarbamoyl-AMP synthase (187 aa).

In terms of domain architecture, YrdC-like spans 4 to 187; sequence TLTLSEAVTA…DARSGHILRL (184 aa).

It belongs to the SUA5 family. TsaC subfamily.

The protein localises to the cytoplasm. It catalyses the reaction L-threonine + hydrogencarbonate + ATP = L-threonylcarbamoyladenylate + diphosphate + H2O. Functionally, required for the formation of a threonylcarbamoyl group on adenosine at position 37 (t(6)A37) in tRNAs that read codons beginning with adenine. Catalyzes the conversion of L-threonine, HCO(3)(-)/CO(2) and ATP to give threonylcarbamoyl-AMP (TC-AMP) as the acyladenylate intermediate, with the release of diphosphate. This Xylella fastidiosa (strain M23) protein is Threonylcarbamoyl-AMP synthase.